The sequence spans 151 residues: Aspartate 1-decarboxylase (151 aa).

Residue Ser-26 is the Schiff-base intermediate with substrate; via pyruvic acid of the active site. Ser-26 carries the pyruvic acid (Ser) modification. Thr-58 contributes to the substrate binding site. The active-site Proton donor is Tyr-59. 74 to 76 serves as a coordination point for substrate; that stretch reads GGA.

This sequence belongs to the PanD family. Heterooctamer of four alpha and four beta subunits. It depends on pyruvate as a cofactor. In terms of processing, is synthesized initially as an inactive proenzyme, which is activated by self-cleavage at a specific serine bond to produce a beta-subunit with a hydroxyl group at its C-terminus and an alpha-subunit with a pyruvoyl group at its N-terminus.

The protein resides in the cytoplasm. It catalyses the reaction L-aspartate + H(+) = beta-alanine + CO2. It functions in the pathway cofactor biosynthesis; (R)-pantothenate biosynthesis; beta-alanine from L-aspartate: step 1/1. Functionally, catalyzes the pyruvoyl-dependent decarboxylation of aspartate to produce beta-alanine. This is Aspartate 1-decarboxylase from Crocosphaera subtropica (strain ATCC 51142 / BH68) (Cyanothece sp. (strain ATCC 51142)).